The chain runs to 280 residues: Uroporphyrinogen-III C-methyltransferase (280 aa).

S-adenosyl-L-homocysteine-binding positions include Pro-24, 100–102, 130–131, Met-184, Ala-213, and Ala-241; these read GGD and TA.

The protein belongs to the precorrin methyltransferase family. In terms of assembly, homodimer.

It catalyses the reaction uroporphyrinogen III + 2 S-adenosyl-L-methionine = precorrin-2 + 2 S-adenosyl-L-homocysteine + H(+). The catalysed reaction is uroporphyrinogen III + S-adenosyl-L-methionine = precorrin-1 + S-adenosyl-L-homocysteine + H(+). It carries out the reaction precorrin-1 + S-adenosyl-L-methionine = precorrin-2 + S-adenosyl-L-homocysteine. The protein operates within cofactor biosynthesis; adenosylcobalamin biosynthesis; precorrin-2 from uroporphyrinogen III: step 1/1. It functions in the pathway porphyrin-containing compound metabolism; siroheme biosynthesis; precorrin-2 from uroporphyrinogen III: step 1/1. With respect to regulation, S-adenosylhomocysteine is an extremely powerful competitive inhibitor of the uroporphyrinogen III methylation. SUMT exhibits a substrate inhibition phenomenon at uroporphyrinogen III concentrations above 2 uM; this property might play a regulatory role in cobalamin biosynthesis. The enzyme activity is completely insensitive to feedback inhibition by cobalamin and corrinoid intermediates. Catalyzes the two successive C-2 and C-7 methylation reactions involved in the conversion of uroporphyrinogen III to precorrin-2 via the intermediate formation of precorrin-1. It is a step in the biosynthesis of both cobalamin (vitamin B12) and siroheme. Neither uroporphyrin III nor the chlorin (factor I) is a substrate of SUMT. The chain is Uroporphyrinogen-III C-methyltransferase from Sinorhizobium sp.